Reading from the N-terminus, the 431-residue chain is 3-deoxy-D-manno-octulosonic acid transferase (431 aa).

Residues Trp-5–Phe-27 traverse the membrane as a helical; Signal-anchor segment. The active-site Proton acceptor is the Glu-67. CMP contacts are provided by residues Pro-275 to Arg-276, Met-315 to Val-317, and Asn-342 to Glu-345.

Belongs to the glycosyltransferase group 1 family. Glycosyltransferase 30 subfamily.

It localises to the cell inner membrane. It catalyses the reaction lipid IVA (E. coli) + CMP-3-deoxy-beta-D-manno-octulosonate = alpha-Kdo-(2-&gt;6)-lipid IVA (E. coli) + CMP + H(+). The catalysed reaction is alpha-Kdo-(2-&gt;6)-lipid IVA (E. coli) + CMP-3-deoxy-beta-D-manno-octulosonate = alpha-Kdo-(2-&gt;4)-alpha-Kdo-(2-&gt;6)-lipid IVA (E. coli) + CMP + H(+). The enzyme catalyses alpha-Kdo-(2-&gt;4)-alpha-Kdo-(2-&gt;6)-lipid IVA (E. coli) + CMP-3-deoxy-beta-D-manno-octulosonate = alpha-Kdo-(2-&gt;8)-alpha-Kdo-(2-&gt;4)-alpha-Kdo-(2-&gt;6)-lipid IVA (E. coli) + CMP + H(+). It participates in bacterial outer membrane biogenesis; LPS core biosynthesis. Its function is as follows. Involved in lipopolysaccharide (LPS) biosynthesis. Catalyzes the transfer of three 3-deoxy-D-manno-octulosonate (Kdo) residues from CMP-Kdo to lipid IV(A), the tetraacyldisaccharide-1,4'-bisphosphate precursor of lipid A. Thus generates the genus-specific LPS epitope of Chlamydia, composed of the trisaccharide alpha-Kdo-(2-&gt;8)-alpha-Kdo-(2-&gt;4)-alpha-Kdo. This Chlamydia trachomatis serovar D (strain ATCC VR-885 / DSM 19411 / UW-3/Cx) protein is 3-deoxy-D-manno-octulosonic acid transferase (waaA).